The primary structure comprises 230 residues: CRP-like protein Clp (230 aa).

18–139 (PSLALDAGTI…APKILYAIGV (122 aa)) contacts a nucleoside 3',5'-cyclic phosphate. Residues 158-230 (LDVTDRIVRT…GKTVVLYGTR (73 aa)) form the HTH crp-type domain. The segment at residues 190-209 (RQELARLVGCSREMAGRVLK) is a DNA-binding region (H-T-H motif).

Homodimer.

The protein localises to the cytoplasm. Allosterically inhibited by cyclic di-GMP (c-di-GMP), which binds to Clp and abolishes its ability to bind its target gene promoter. Functionally, global transcriptional regulator that regulates virulence factors production by activating or repressing the expression of a large set of genes in diffusible signal factor (DSF) pathway. This Xanthomonas oryzae pv. oryzae (strain MAFF 311018) protein is CRP-like protein Clp (clp).